A 317-amino-acid polypeptide reads, in one-letter code: MLVVLFTVALLALSSAQGPREELQNQIQIPNQRPPPSGSQPRPPVNGSQQGPPPPGGPQPRPPQGPPPPGGPQPRPPQGPPPPGGPQPRPPQGPPPPGGPQPRPPQGPPPPGGPQPRPPQGPPPPGGPQPRPPQGPPPPGGPQQRPPQGPPPPGGPQPRPPQGPPPPAGPQPRPPQGPPPPAGPHLRPTQGPPPTGGPQQRYPQSPPPPGGPQPRPPQGPPPPGGPHPRPTQGPPPTGPQPRPTQGPPPTGGPQQRPPQGPPPPGGPQPRPPQGPPPPTGPQPRPTQGPHPTGGPQQTPPLAGNPQGPPQGRPQGPQ.

The first 16 residues, 1–16 (MLVVLFTVALLALSSA), serve as a signal peptide directing secretion. The segment at 15–317 (SAQGPREELQ…PPQGRPQGPQ (303 aa)) is disordered. The segment covering 32 to 44 (QRPPPSGSQPRPP) has biased composition (pro residues). An N-linked (GlcNAc...) asparagine glycan is attached at N46. Composition is skewed to pro residues over residues 51 to 183 (GPPP…PPAG) and 204 to 288 (QSPP…PTQG). Over residues 289 to 305 (PHPTGGPQQTPPLAGNP) the composition is skewed to low complexity. A compositionally biased stretch (pro residues) spans 306-317 (QGPPQGRPQGPQ).

Its subcellular location is the secreted. This is Proline-rich protein 2 (Prp2) from Mus musculus (Mouse).